The primary structure comprises 193 residues: MADKYTPRLKGKYDAEIAAAMQAKFGYKNALEIPRIEKITLNMGVGEASQDKKKVTTAAAEMELIAGQKPVITKAKKSIAQFKLREGMPIGCKVTLRRERMYEFLDRLITIAMPRIRDFRGLNPKSFDGRGNYAMGLKEQIIFPEISYDQIEKVRGMDIIVTTTAKTDDEARELLRLFGFPFPQDAAEQQQAA.

The protein belongs to the universal ribosomal protein uL5 family. As to quaternary structure, part of the 50S ribosomal subunit; part of the 5S rRNA/L5/L18/L25 subcomplex. Contacts the 5S rRNA and the P site tRNA. Forms a bridge to the 30S subunit in the 70S ribosome.

This is one of the proteins that bind and probably mediate the attachment of the 5S RNA into the large ribosomal subunit, where it forms part of the central protuberance. In the 70S ribosome it contacts protein S13 of the 30S subunit (bridge B1b), connecting the 2 subunits; this bridge is implicated in subunit movement. Contacts the P site tRNA; the 5S rRNA and some of its associated proteins might help stabilize positioning of ribosome-bound tRNAs. The chain is Large ribosomal subunit protein uL5 from Novosphingobium aromaticivorans (strain ATCC 700278 / DSM 12444 / CCUG 56034 / CIP 105152 / NBRC 16084 / F199).